Consider the following 397-residue polypeptide: MLNSLDLEGRPQDTRVVVAMSGGVDSSATAALLKAQGYDVVGITLQLYDHGEAIHRKGACCAGQDIHDARAVAERIGIPHYVLDYESRFRESVIDSFADSYASGETPVPCIECNRSVKFRDLLATARELGASALATGHYVSSRRLDDGSRALVCAADRDRDQSYFLFATTREQLQFLRFPLGDMTKPQTRELARQFGLSVADKHDSQDICFVPTGRYTDVVERLKPNAMEPGDIVDVDGRVLGQHPGIVHFTVGQRRGLGIASRSPLYVLRLDAAQRQVVVGPREALLMDRIVLRDINWIGDGSLDDVIGDGLELFVRVRSTRAPQPAWLRAANGGYEVELVVGEEGVSPGQACVFYDAAEGQARVLGGGFIKSAAPRRFEGGREQIEAPALAAARG.

Residues 19-26 (AMSGGVDS) and Leu45 contribute to the ATP site. Catalysis depends on Cys113, which acts as the Nucleophile. An intrachain disulfide couples Cys113 to Cys210. Gly137 is an ATP binding site. The tract at residues 160–162 (RDQ) is interaction with tRNA. Cys210 functions as the Cysteine persulfide intermediate in the catalytic mechanism.

The protein belongs to the MnmA/TRMU family.

Its subcellular location is the cytoplasm. The catalysed reaction is S-sulfanyl-L-cysteinyl-[protein] + uridine(34) in tRNA + AH2 + ATP = 2-thiouridine(34) in tRNA + L-cysteinyl-[protein] + A + AMP + diphosphate + H(+). In terms of biological role, catalyzes the 2-thiolation of uridine at the wobble position (U34) of tRNA, leading to the formation of s(2)U34. This chain is tRNA-specific 2-thiouridylase MnmA, found in Rhodopseudomonas palustris (strain ATCC BAA-98 / CGA009).